A 253-amino-acid polypeptide reads, in one-letter code: MVQVEKGHVAVVFLNDPERRNPLSPEMALSLLQALDDLEADPGVRAVVLTGRGKAFSAGADLAFLERVTELGAEENYRHSLSLMRLFHRVYTYPKPTVAAVNGPAVAGGAGLALACDLVVMDEEARLGYTEVKIGFVAALVSVILVRAVGEKAAKDLLLTGRLVEAREAKALGLVNRIAPPGKALEEAKALAEEVAKNAPTSLRLTKELLLALPGMGLEDGFRLAALANAWVRETGDLKEGIRAFFEKRPPRF.

E131 is a catalytic residue.

Belongs to the enoyl-CoA hydratase/isomerase family. Homohexamer; dimer of trimers.

The catalysed reaction is a (3S)-3-hydroxyacyl-CoA = a (2E)-enoyl-CoA + H2O. The protein is Putative enoyl-CoA hydratase of Thermus thermophilus (strain ATCC 27634 / DSM 579 / HB8).